A 2382-amino-acid polypeptide reads, in one-letter code: Highly reducing polyketide synthase srdA (2382 aa).

The disordered stretch occupies residues 1 to 25 (MAPHSTLDSDYSSGSSTPTSASAAG). One can recognise a Ketosynthase family 3 (KS3) domain in the interval 44 to 474 (QEPIAIIGMG…GANAHAILEA (431 aa)). Catalysis depends on for beta-ketoacyl synthase activity residues Cys-217, His-352, and His-390. The interval 580–891 (VFTGQGAQWP…HYGSALSRGK (312 aa)) is malonyl-CoA:ACP transacylase (MAT) domain. The active-site For malonyltransferase activity is Ser-672. The segment at 971 to 1108 (HDLLGSQVHG…GLVKIDSAPA (138 aa)) is N-terminal hotdog fold. Positions 971–1274 (HDLLGSQVHG…RQVSYQSGIQ (304 aa)) are dehydratase (DH) domain. One can recognise a PKS/mFAS DH domain in the interval 971–1275 (HDLLGSQVHG…QVSYQSGIQQ (305 aa)). His-1003 serves as the catalytic Proton acceptor; for dehydratase activity. The C-terminal hotdog fold stretch occupies residues 1121–1275 (MEPQAPRTWY…QVSYQSGIQQ (155 aa)). Residue Asp-1189 is the Proton donor; for dehydratase activity of the active site. The segment at 1668–1979 (GQIDSIFFRR…AKGHSGSVVV (312 aa)) is enoyl reductase (ER) domain. The segment at 2004–2180 (SYLLVGCLGG…ATSIGLGMIS (177 aa)) is ketoreductase (KR) domain. One can recognise a Carrier domain in the interval 2298–2376 (SVEDAVLKMI…LLSELITKKM (79 aa)). Ser-2335 carries the O-(pantetheine 4'-phosphoryl)serine modification.

In terms of biological role, highly reducing polyketide synthase; part of the gene cluster that mediates the biosynthesis of sordarial, a salicylic aldehyde structurally related to the phytotoxin pyriculol. The most interesting aspect of this pathway is formation of an aromatic product from the highly reducing polyketide synthase srdA. SrdA synthesizes a reduced polyketide chain from one molecule of acetyl-CoA and five molecules of malonyl-CoA. The polyketide chain is then reductively released as an aldehyde. The oxidoreductases srdC, srdD and srdE then oxidize one of the hydroxy groups to facilitate the intramolecular aldol condensation, followed by dehydration to yield a salicylic aldehyde. This aldehyde can undergo facile reduction by endogenous reductases to yield the alcohol 1-hydroxy-2-hydroxymethyl-3-pent-1,3-dienylbenzene. The flavin-dependent srdI counteract against the propensity of the aldehydes to be reduced under physiological conditions and is responsible for reoxidizing 1-hydroxy-2-hydroxymethyl-3-pent-1,3-dienylbenzene back to the salicylic aldehyde. This salicylic aldehyde is then selectively epoxidized by the cupin-domain-containing oxidoreductase srdB to yield the epoxide, which can be hydrolyzed stereoselectively by the hydrolase srdG to give the final product sordarial. This Neurospora crassa (strain ATCC 24698 / 74-OR23-1A / CBS 708.71 / DSM 1257 / FGSC 987) protein is Highly reducing polyketide synthase srdA.